A 96-amino-acid polypeptide reads, in one-letter code: Large ribosomal subunit protein eL43 (96 aa).

The C4-type zinc finger occupies 41–62; that stretch reads CPVCAFPKLKRVGTSIWVCDKC.

The protein belongs to the eukaryotic ribosomal protein eL43 family. Zn(2+) is required as a cofactor.

This chain is Large ribosomal subunit protein eL43, found in Methanococcus maripaludis (strain C6 / ATCC BAA-1332).